Reading from the N-terminus, the 505-residue chain is Lysine--tRNA ligase (505 aa).

Glutamate 415 and glutamate 422 together coordinate Mg(2+).

The protein belongs to the class-II aminoacyl-tRNA synthetase family. Homodimer. Mg(2+) is required as a cofactor.

Its subcellular location is the cytoplasm. It carries out the reaction tRNA(Lys) + L-lysine + ATP = L-lysyl-tRNA(Lys) + AMP + diphosphate. The polypeptide is Lysine--tRNA ligase (Escherichia coli O157:H7).